Reading from the N-terminus, the 378-residue chain is Chaperone protein DnaJ (378 aa).

The region spanning 5 to 69 (EFYDRLGVSK…QKRAAYDQYG (65 aa)) is the J domain. A CR-type zinc finger spans residues 135–217 (GTEKEVKYHR…CHGTGHEKQA (83 aa)). Zn(2+) contacts are provided by Cys-148, Cys-151, Cys-165, Cys-168, Cys-191, Cys-194, Cys-205, and Cys-208. CXXCXGXG motif repeat units follow at residues 148–155 (CRTCNGSG), 165–172 (CGRCHGAG), 191–198 (CDVCHGRG), and 205–212 (CTTCHGTG).

This sequence belongs to the DnaJ family. Homodimer. Zn(2+) is required as a cofactor.

It is found in the cytoplasm. Participates actively in the response to hyperosmotic and heat shock by preventing the aggregation of stress-denatured proteins and by disaggregating proteins, also in an autonomous, DnaK-independent fashion. Unfolded proteins bind initially to DnaJ; upon interaction with the DnaJ-bound protein, DnaK hydrolyzes its bound ATP, resulting in the formation of a stable complex. GrpE releases ADP from DnaK; ATP binding to DnaK triggers the release of the substrate protein, thus completing the reaction cycle. Several rounds of ATP-dependent interactions between DnaJ, DnaK and GrpE are required for fully efficient folding. Also involved, together with DnaK and GrpE, in the DNA replication of plasmids through activation of initiation proteins. This Streptococcus pneumoniae serotype 4 (strain ATCC BAA-334 / TIGR4) protein is Chaperone protein DnaJ.